A 453-amino-acid chain; its full sequence is Tubulin beta-1 chain (453 aa).

Gln-12, Glu-71, Ser-140, Gly-144, Thr-145, Gly-146, Asn-206, and Asn-228 together coordinate GTP. Glu-71 lines the Mg(2+) pocket. Residues 431-453 (TADGVEGYEEEGYENDHPEDDEE) form a disordered region. The segment covering 436-453 (EGYEEEGYENDHPEDDEE) has biased composition (acidic residues).

This sequence belongs to the tubulin family. Dimer of alpha and beta chains. A typical microtubule is a hollow water-filled tube with an outer diameter of 25 nm and an inner diameter of 15 nM. Alpha-beta heterodimers associate head-to-tail to form protofilaments running lengthwise along the microtubule wall with the beta-tubulin subunit facing the microtubule plus end conferring a structural polarity. Microtubules usually have 13 protofilaments but different protofilament numbers can be found in some organisms and specialized cells. It depends on Mg(2+) as a cofactor.

The protein localises to the cytoplasm. It localises to the cytoskeleton. In terms of biological role, tubulin is the major constituent of microtubules, a cylinder consisting of laterally associated linear protofilaments composed of alpha- and beta-tubulin heterodimers. Microtubules grow by the addition of GTP-tubulin dimers to the microtubule end, where a stabilizing cap forms. Below the cap, tubulin dimers are in GDP-bound state, owing to GTPase activity of alpha-tubulin. The sequence is that of Tubulin beta-1 chain (TUBB) from Chondrus crispus (Carrageen Irish moss).